The sequence spans 683 residues: DNA-directed RNA polymerase subunit beta' (683 aa).

Zn(2+) is bound by residues C69, C71, C87, and C90. Positions 489, 491, and 493 each coordinate Mg(2+).

This sequence belongs to the RNA polymerase beta' chain family. RpoC1 subfamily. As to quaternary structure, in plastids the minimal PEP RNA polymerase catalytic core is composed of four subunits: alpha, beta, beta', and beta''. When a (nuclear-encoded) sigma factor is associated with the core the holoenzyme is formed, which can initiate transcription. Requires Mg(2+) as cofactor. Zn(2+) serves as cofactor.

The protein localises to the plastid. Its subcellular location is the chloroplast. It carries out the reaction RNA(n) + a ribonucleoside 5'-triphosphate = RNA(n+1) + diphosphate. In terms of biological role, DNA-dependent RNA polymerase catalyzes the transcription of DNA into RNA using the four ribonucleoside triphosphates as substrates. The sequence is that of DNA-directed RNA polymerase subunit beta' from Saccharum hybrid (Sugarcane).